The following is a 336-amino-acid chain: MIYRLARSVFFQLDAEKAHDLAIQNFSRFTGTPLDLFYRQHVPDRPVEVMGIKFKNPVGLAAGLDKNGECIDAFGAMGFGFVEVGTVTPRPQSGNEKPRLFRVLPAEGLINRFGFNNLGVDNLVENVKKSKYDGVIGINIGKNKDTPIEKGAEDYLICMDKVYEHAGYIAVNISSPNTPGLRSLQYGEALDDLLSQLKAKQEELAAKHGKYVPLALKIAPDLEDHEIVQIAESLIKNKIDGVIGTNTTLDRTLVKGMPHCDEMGGLSGRPLQNRSTEVIRRLAEELNGALPIIGVGGIDSAISAREKMNAGAQLVQIYSGFIYHGPKLVKDIVMNS.

Residues 62–66 (AGLDK) and Thr-86 each bind FMN. Position 66 (Lys-66) interacts with substrate. 111 to 115 (NRFGF) contributes to the substrate binding site. Asn-139 and Asn-172 together coordinate FMN. A substrate-binding site is contributed by Asn-172. Ser-175 functions as the Nucleophile in the catalytic mechanism. Asn-177 contributes to the substrate binding site. 2 residues coordinate FMN: Lys-217 and Thr-245. Substrate is bound at residue 246–247 (NT). Residues Gly-268, Gly-297, and 318-319 (YS) contribute to the FMN site.

It belongs to the dihydroorotate dehydrogenase family. Type 2 subfamily. Monomer. FMN is required as a cofactor.

The protein localises to the cell membrane. The enzyme catalyses (S)-dihydroorotate + a quinone = orotate + a quinol. It participates in pyrimidine metabolism; UMP biosynthesis via de novo pathway; orotate from (S)-dihydroorotate (quinone route): step 1/1. In terms of biological role, catalyzes the conversion of dihydroorotate to orotate with quinone as electron acceptor. This chain is Dihydroorotate dehydrogenase (quinone), found in Photobacterium profundum (strain SS9).